The sequence spans 444 residues: Structure-specific endonuclease subunit SLX1 (444 aa).

The 83-residue stretch at 23–105 (AFYCCYLLRS…QNTKVSRHAD (83 aa)) folds into the GIY-YIG domain. The SLX1-type zinc-finger motif lies at 240–295 (CGVCKQRLILQHDIIAVCSHSSCHCAAHLSCLSSHFLKDKDSDSELIPREGTCPAC). Disordered stretches follow at residues 323–355 (RRRR…DALQ) and 386–444 (AHRP…EVIE).

It belongs to the SLX1 family. As to quaternary structure, forms a heterodimer with SLX4. Requires a divalent metal cation as cofactor.

It localises to the nucleus. Catalytic subunit of the SLX1-SLX4 structure-specific endonuclease that resolves DNA secondary structures generated during DNA repair and recombination. Has endonuclease activity towards branched DNA substrates, introducing single-strand cuts in duplex DNA close to junctions with ss-DNA. The protein is Structure-specific endonuclease subunit SLX1 of Paracoccidioides brasiliensis (strain Pb18).